A 196-amino-acid polypeptide reads, in one-letter code: MNIIRKLKPGTISLVLGPMFAGKTTFLIHCIYMLEHLEKKVVFIKSTKNTRDKTIKTHSGIQLRPKHCKIIESTQLSDVGSLTDIHAVVIDEAHFFDDLIKCRTWADEEKIIILAGLNASFEQKMFPPIVRIFPYCSWVKYIGRTCMKCNRHNACFNVRKNADKTLILAGGSELYVTCCNNCLKNTFIKQLQPIKY.

An ATP-binding site is contributed by 17 to 24 (GPMFAGKT). Glutamate 92 serves as the catalytic Proton acceptor. A substrate-binding site is contributed by phenylalanine 121. Cysteine 146 and cysteine 149 together coordinate Zn(2+). 166-170 (LILAG) lines the substrate pocket. Zn(2+) contacts are provided by cysteine 179 and cysteine 182.

It belongs to the thymidine kinase family.

It catalyses the reaction thymidine + ATP = dTMP + ADP + H(+). Its function is as follows. Phosphorylates thymidine. ASFV replicates in the cytoplasm of infected cells and contains genes encoding a number of enzymes needed for DNA synthesis, including thymidine kinase. Important for growth in swine macrophages in vitro and is a virus virulence factor in swine. This chain is Thymidine kinase, found in Ornithodoros (relapsing fever ticks).